The sequence spans 603 residues: Autophagy-related protein 13a (603 aa).

Position 248 is a phosphoserine (S248). Disordered stretches follow at residues 258-477 and 498-518; these read PSPG…DDLD and SHSLDRRKTSSSISQSLPLGR. Over residues 301–315 the composition is skewed to polar residues; the sequence is ATPNQSFSPAQSHQL. Residues 320-331 show a composition bias toward basic and acidic residues; the sequence is HDFHWSRTDAFG. Polar residues-rich tracts occupy residues 371 to 386 and 419 to 437; these read IPSSATLNRYVSSNFS and SSRSGESPSGLMNQYPTQK. A compositionally biased stretch (low complexity) spans 453-473; sequence LSSSDSPRFAFSRSPSRLSSQ.

It belongs to the ATG13 family. Plant subfamily. In terms of assembly, interacts with ATG1A. Interacts with ATG11 and ATG101. Phosphorylated during nutrient starvation. Dephosphorylated in nutrient-rich conditions.

It localises to the cytoplasmic vesicle. It is found in the autophagosome. Its function is as follows. Involved in autophagy in a nutritional condition dependent manner. The ATG1-ATG13 protein kinase complex regulates downstream events required for autophagosome enclosure and/or vacuolar delivery. Becomes a target of autophagy under nutrient starvation. Connects autophagy to plant nutritional status. The protein is Autophagy-related protein 13a of Arabidopsis thaliana (Mouse-ear cress).